Consider the following 156-residue polypeptide: Small ribosomal subunit protein uS7 (156 aa).

Belongs to the universal ribosomal protein uS7 family. As to quaternary structure, part of the 30S ribosomal subunit. Contacts proteins S9 and S11.

In terms of biological role, one of the primary rRNA binding proteins, it binds directly to 16S rRNA where it nucleates assembly of the head domain of the 30S subunit. Is located at the subunit interface close to the decoding center, probably blocks exit of the E-site tRNA. The polypeptide is Small ribosomal subunit protein uS7 (Carboxydothermus hydrogenoformans (strain ATCC BAA-161 / DSM 6008 / Z-2901)).